We begin with the raw amino-acid sequence, 276 residues long: Omega-amidase NIT2 (276 aa).

Residues 4–248 form the CN hydrolase domain; it reads FRLALIQLQI…EAIVYSDIDL (245 aa). A Phosphoserine modification is found at serine 26. The active-site Proton acceptor is glutamate 43. Lysine 68 is modified (N6-acetyllysine; alternate). Lysine 68 is modified (N6-succinyllysine; alternate). Lysine 112 serves as the catalytic Proton donor. Residues lysine 123 and lysine 130 each carry the N6-succinyllysine modification. Cysteine 153 acts as the Nucleophile in catalysis.

Homodimer. Detected in fetal brain (at protein level). Ubiquitous. Detected in heart, brain, placenta, lung, liver, skeletal muscle, kidney, pancreas, prostate, spleen, thymus, prostate, testis, ovary, small intestine and colon.

The protein localises to the cytoplasm. The enzyme catalyses a monoamide of a dicarboxylate + H2O = a dicarboxylate + NH4(+). The catalysed reaction is 2-oxoglutaramate + H2O = 2-oxoglutarate + NH4(+). It carries out the reaction 2-oxosuccinamate + H2O = oxaloacetate + NH4(+). Has omega-amidase activity. The role of omega-amidase is to remove potentially toxic intermediates by converting 2-oxoglutaramate and 2-oxosuccinamate to biologically useful 2-oxoglutarate and oxaloacetate, respectively. The polypeptide is Omega-amidase NIT2 (NIT2) (Homo sapiens (Human)).